Reading from the N-terminus, the 706-residue chain is Fatty acid oxidation complex subunit alpha (706 aa).

The segment at 1–188 is enoyl-CoA hydratase; the sequence is MEKTFNLTRR…KMGLVNDVVP (188 aa). The segment at 308–706 is 3-hydroxyacyl-CoA dehydrogenase; sequence RKVKKAVILG…TMARENVSFF (399 aa).

In the N-terminal section; belongs to the enoyl-CoA hydratase/isomerase family. This sequence in the central section; belongs to the 3-hydroxyacyl-CoA dehydrogenase family. Heterotetramer of two alpha chains (FadJ) and two beta chains (FadI).

Its subcellular location is the cytoplasm. The catalysed reaction is a (3S)-3-hydroxyacyl-CoA = a (2E)-enoyl-CoA + H2O. It catalyses the reaction a 4-saturated-(3S)-3-hydroxyacyl-CoA = a (3E)-enoyl-CoA + H2O. The enzyme catalyses a (3S)-3-hydroxyacyl-CoA + NAD(+) = a 3-oxoacyl-CoA + NADH + H(+). It carries out the reaction (3S)-3-hydroxybutanoyl-CoA = (3R)-3-hydroxybutanoyl-CoA. The protein operates within lipid metabolism; fatty acid beta-oxidation. In terms of biological role, catalyzes the formation of a hydroxyacyl-CoA by addition of water on enoyl-CoA. Also exhibits 3-hydroxyacyl-CoA epimerase and 3-hydroxyacyl-CoA dehydrogenase activities. This is Fatty acid oxidation complex subunit alpha from Shewanella sp. (strain W3-18-1).